A 464-amino-acid chain; its full sequence is tRNA modification GTPase MnmE (464 aa).

(6S)-5-formyl-5,6,7,8-tetrahydrofolate contacts are provided by R27, E90, and K129. Residues 222–384 (GITLVLAGSV…LYDKIRTLIS (163 aa)) enclose the TrmE-type G domain. Residues 232–237 (NAGKSS), 251–257 (SSYPGTT), and 276–279 (DTAG) each bind GTP. Residues S236 and T257 each contribute to the Mg(2+) site. Position 464 (K464) interacts with (6S)-5-formyl-5,6,7,8-tetrahydrofolate.

Belongs to the TRAFAC class TrmE-Era-EngA-EngB-Septin-like GTPase superfamily. TrmE GTPase family. In terms of assembly, homodimer. Heterotetramer of two MnmE and two MnmG subunits. K(+) serves as cofactor.

It is found in the cytoplasm. Exhibits a very high intrinsic GTPase hydrolysis rate. Involved in the addition of a carboxymethylaminomethyl (cmnm) group at the wobble position (U34) of certain tRNAs, forming tRNA-cmnm(5)s(2)U34. In Borreliella afzelii (strain PKo) (Borrelia afzelii), this protein is tRNA modification GTPase MnmE.